Here is a 111-residue protein sequence, read N- to C-terminus: Iron-sulfur cluster insertion protein ErpA (111 aa).

Iron-sulfur cluster is bound by residues Cys39, Cys103, and Cys105.

It belongs to the HesB/IscA family. As to quaternary structure, homodimer. Iron-sulfur cluster serves as cofactor.

Required for insertion of 4Fe-4S clusters for at least IspG. This is Iron-sulfur cluster insertion protein ErpA from Buchnera aphidicola subsp. Cinara cedri (strain Cc).